Consider the following 243-residue polypeptide: Probable glycerol uptake facilitator protein (243 aa).

Helical transmembrane passes span 7 to 27 (ILLGELIGTMVLIILGNGVCA) and 44 to 64 (LLIALGWGFAVFCGVVISIQV). The short motif at 72 to 74 (NPA) is the NPA 1 element. 3 consecutive transmembrane segments (helical) span residues 88-108 (IGLLFAMIAMQLLGAMIAQII), 143-163 (ISYEMLGTMILLAGVMAGDYH), and 166-186 (TGVFFVMAIVMSLGSVTGCAI). The short motif at 187–189 (NPA) is the NPA 2 element. The helical transmembrane segment at 221-241 (LVPLLAPIAAGLIMGGFSLLI) threads the bilayer.

Belongs to the MIP/aquaporin (TC 1.A.8) family.

It is found in the cell membrane. The catalysed reaction is glycerol(in) = glycerol(out). Its function is as follows. Mediates glycerol diffusion across the cytoplasmic membrane via a pore-type mechanism. The polypeptide is Probable glycerol uptake facilitator protein (glpF) (Mycoplasmoides gallisepticum (strain R(low / passage 15 / clone 2)) (Mycoplasma gallisepticum)).